The chain runs to 223 residues: Small ribosomal subunit protein uS5 (223 aa).

The segment at 1–66 is disordered; the sequence is MPPQQQRGRG…AERAQAETEF (66 aa). Residues 13 to 22 are compositionally biased toward gly residues; the sequence is RGPGGPGGPG. Positions 53-66 are enriched in basic and acidic residues; it reads GGDKAERAQAETEF. Residues 66 to 129 enclose the S5 DRBM domain; sequence FQERVVQIRR…SDARKALIRV (64 aa).

This sequence belongs to the universal ribosomal protein uS5 family. In terms of assembly, part of the 30S ribosomal subunit. Contacts proteins S4 and S8.

Functionally, with S4 and S12 plays an important role in translational accuracy. Located at the back of the 30S subunit body where it stabilizes the conformation of the head with respect to the body. The sequence is that of Small ribosomal subunit protein uS5 from Gloeobacter violaceus (strain ATCC 29082 / PCC 7421).